The following is a 500-amino-acid chain: 4-aminobutyrate aminotransferase, mitochondrial (500 aa).

Residues 1–28 constitute a mitochondrion transit peptide; that stretch reads MASVLLTRRLACSFRHNHRLLVPGWRHI. Cys-163 is a binding site for [2Fe-2S] cluster. Residue 164 to 165 participates in pyridoxal 5'-phosphate binding; it reads GS. Cys-166 is a [2Fe-2S] cluster binding site. Arg-220 contributes to the substrate binding site. Lys-231 bears the N6-succinyllysine mark. Position 252 is an N6-acetyllysine; alternate (Lys-252). Lys-252 carries the post-translational modification N6-succinyllysine; alternate. N6-acetyllysine is present on residues Lys-279 and Lys-318. The residue at position 357 (Lys-357) is an N6-(pyridoxal phosphate)lysine. Residue Thr-381 participates in pyridoxal 5'-phosphate binding. Lys-413 carries the post-translational modification N6-acetyllysine; alternate. Residue Lys-413 is modified to N6-succinyllysine; alternate. Residues Lys-452 and Lys-470 each carry the N6-acetyllysine modification.

This sequence belongs to the class-III pyridoxal-phosphate-dependent aminotransferase family. As to quaternary structure, homodimer; disulfide-linked. Pyridoxal 5'-phosphate serves as cofactor. It depends on [2Fe-2S] cluster as a cofactor.

The protein localises to the mitochondrion matrix. The enzyme catalyses 4-aminobutanoate + 2-oxoglutarate = succinate semialdehyde + L-glutamate. The catalysed reaction is (S)-3-amino-2-methylpropanoate + 2-oxoglutarate = 2-methyl-3-oxopropanoate + L-glutamate. Its function is as follows. Catalyzes the conversion of gamma-aminobutyrate and L-beta-aminoisobutyrate to succinate semialdehyde and methylmalonate semialdehyde, respectively. Can also convert delta-aminovalerate and beta-alanine. This is 4-aminobutyrate aminotransferase, mitochondrial (ABAT) from Sus scrofa (Pig).